The sequence spans 320 residues: tRNA pseudouridine synthase B (320 aa).

The active-site Nucleophile is D48.

The protein belongs to the pseudouridine synthase TruB family. Type 1 subfamily.

It catalyses the reaction uridine(55) in tRNA = pseudouridine(55) in tRNA. Functionally, responsible for synthesis of pseudouridine from uracil-55 in the psi GC loop of transfer RNAs. This Mycobacterium leprae (strain TN) protein is tRNA pseudouridine synthase B.